A 581-amino-acid chain; its full sequence is Protein SPT2 homolog (581 aa).

The span at 26-35 (YYSTKYSPPK) shows a compositional bias: low complexity. Disordered regions lie at residues 26–50 (YYSTKYSPPKKQSKESKQLSSNIQK) and 145–495 (QEDK…EYDS). The stretch at 36 to 76 (KQSKESKQLSSNIQKFLQKKEAEEAEKKRLERQKLNDLLAK) forms a coiled coil. Over residues 162-181 (SGTKERVKAAITREREEAKG) the composition is skewed to basic and acidic residues. Polar residues-rich tracts occupy residues 182 to 197 (NTRQKSSTSTLPSSAT) and 204 to 213 (VARSYSTSKT). 2 stretches are compositionally biased toward basic and acidic residues: residues 218-236 (NAEKLEEERKKRQEEEQRR) and 256-312 (LAEK…KETP). Residues 276-307 (ERLLSAREKRELEERQRQQEQRAQRLKMRESE) are a coiled coil. Low complexity predominate over residues 352–376 (SSASSTSLSSSNSHSSASRSSVSSS). Residues 447–461 (TRQTPSSDVQRSQGG) show a composition bias toward polar residues. Positions 486 to 495 (DDDDEDEYDS) are enriched in acidic residues.

Belongs to the SPT2 family.

In Drosophila melanogaster (Fruit fly), this protein is Protein SPT2 homolog.